The following is a 237-amino-acid chain: MLSAFQRLFRVLFVIETVSEYGVLIFIYGWPFLQTLAMLLIGTVSFHLWIRRNRERNSRSGKTRCRSKRSEQSMDMGTSALSKKPWWTLPQNFHAPMVFHMEEDQEELIFGHGDTYLRCIEVHSHTLIQLESWFTATGQTRVTVVGPHRARQWLLHMFCCVGSQDSYHHARGLEMLERVRSQPLTNDDLVTSISVPPYTGDLSLAPRISGTVCLSVPQPSPYQVIGCSGFHLSSLYP.

The next 2 membrane-spanning stretches (helical) occupy residues 7-29 (RLFR…FIYG) and 33-50 (LQTL…HLWI). One can recognise a KH; atypical domain in the interval 96 to 155 (PMVFHMEEDQEELIFGHGDTYLRCIEVHSHTLIQLESWFTATGQTRVTVVGPHRARQWLL).

The protein belongs to the KHDC1 family.

It localises to the membrane. The polypeptide is KH homology domain-containing protein 1 (Homo sapiens (Human)).